Reading from the N-terminus, the 407-residue chain is MTGRHSPHRQTSPSPRPVEKMPRFQREHGASHRYTPMGKRPAAPANTGSHRGALLGRLNGDPERKGEFTAVSKLLKSRGYIPEARTALIEWVEKEGARRGGFEVMCGSILLPGHDESGRAIDDIFRDMSRSVRGEVASPIDELLFRVGNLLEVYVETTTGKPVPAKGLWGVVQVESTVTGIPKMIHVCLDRSLGVGYKCSFAKLWKKTIEELLGTGVGTTNPHCWFTRTIHSDAIQASFDGLNMIFELFGGRVRTGRVSPEGERRVFHTRCLGDDSFNALFAATVHDPTVSRAVFEARVRTVQTSYPAWYTFGDMWTPAPNNVGWVTTPEGSWCYDIRVRDLYNDPNKMSVTPAAAAPPGVPKPEHGEELEADPWKPSSTIGSPAPNLCALYTSGDSVELHAPLLPL.

Disordered stretches follow at residues 1-62 (MTGR…NGDP) and 350-379 (SVTPAAAAPPGVPKPEHGEELEADPWKPSS). Residues 17 to 30 (PVEKMPRFQREHGA) are compositionally biased toward basic and acidic residues.

This is an uncharacterized protein from Ictaluridae (bullhead catfishes).